The primary structure comprises 179 residues: Tegument protein UL55 homolog (179 aa).

This sequence belongs to the alphaherpesvirinae HHV-1 UL55 family.

The protein resides in the virion tegument. It localises to the host nucleus matrix. This Homo sapiens (Human) protein is Tegument protein UL55 homolog.